Reading from the N-terminus, the 285-residue chain is MTTLTHRARRTEVGKNSEKKVESEENVNQDRNQDNEDIGDSKDIRLTLMEEVLLLGLKDKEGYTSFWNDCISSGLRGGILIELAMRGRIYLEPPTMRKKRLLDRKVLLKSDSPTGDVLLDETLKHIKATEPTETVQTWIELLTGETWNPFKLQYQLRNVRERIAKNLVEKGILTTEKQNFLLFDMTTHPVTNTTEKQRLVKKLQDSVLERWVNDPQRMDKRTLALLVLAHSSDVLENVFSSLTDDKYDMAMNRAKDLVELDPEVEGTKHSATEMIWAVLAAFNKS.

The segment at 1–39 is disordered; that stretch reads MTTLTHRARRTEVGKNSEKKVESEENVNQDRNQDNEDIG. Basic and acidic residues predominate over residues 10–23; the sequence is RTEVGKNSEKKVES. A 1,2-diacyl-sn-glycero-3-phospho-(1D-myo-inositol 4-phosphate) is bound by residues W67 and R76. S112 carries the post-translational modification Phosphoserine. A 1,2-diacyl-sn-glycero-3-phospho-(1D-myo-inositol 4-phosphate)-binding residues include R157 and R160. Residues 176–187 are beta-hairpin required for oligomerization; sequence EKQNFLLFDMTT.

It belongs to the GOLPH3/VPS74 family. In terms of assembly, homooligomer. Does not interact MYO18; differs from GOLPH3 by its inability to interact with MYO18. May interact with ARF1.

It localises to the golgi apparatus. The protein localises to the golgi stack membrane. Its subcellular location is the trans-Golgi network membrane. In terms of biological role, phosphatidylinositol-4-phosphate-binding protein that may antagonize the action of GOLPH3 which is required for the process of vesicle budding at the Golgi and anterograde transport to the plasma membrane. The polypeptide is Golgi phosphoprotein 3-like (GOLPH3L) (Bos taurus (Bovine)).